Here is a 209-residue protein sequence, read N- to C-terminus: Ribosomal RNA large subunit methyltransferase E (209 aa).

Residues glycine 63, tryptophan 65, aspartate 83, aspartate 99, and aspartate 124 each contribute to the S-adenosyl-L-methionine site. The Proton acceptor role is filled by lysine 164.

This sequence belongs to the class I-like SAM-binding methyltransferase superfamily. RNA methyltransferase RlmE family.

Its subcellular location is the cytoplasm. The enzyme catalyses uridine(2552) in 23S rRNA + S-adenosyl-L-methionine = 2'-O-methyluridine(2552) in 23S rRNA + S-adenosyl-L-homocysteine + H(+). Its function is as follows. Specifically methylates the uridine in position 2552 of 23S rRNA at the 2'-O position of the ribose in the fully assembled 50S ribosomal subunit. The polypeptide is Ribosomal RNA large subunit methyltransferase E (Alkalilimnicola ehrlichii (strain ATCC BAA-1101 / DSM 17681 / MLHE-1)).